We begin with the raw amino-acid sequence, 159 residues long: Globin CTT-W (159 aa).

An N-terminal signal peptide occupies residues 1-16; sequence MKFLVILTLCIAGAIA. Positions 17-159 constitute a Globin domain; the sequence is HCDKAPFIKA…HHAIVYSILE (143 aa). Heme b is bound by residues histidine 73 and histidine 108.

It belongs to the globin family.

This is Globin CTT-W (CTT-W) from Chironomus thummi thummi (Midge).